Reading from the N-terminus, the 136-residue chain is Non-structural protein 1 (136 aa).

It belongs to the pneumovirus non-structural protein 1 family. Monomer. Homomultimer. Heteromultimer with NS2. Interacts with the matrix protein M. Interacts with host ELOC and CUL2; this interaction allows NS1 to form an active E3 ligase with ELOC and CUL2. Interacts with host IRF3; this interaction leads to the disrupted association of IRF3 with CREBBP and thus reduced binding of IRF3 to the IFN-beta promoter. Interacts with host MAVS; this interaction prevents MAVS binding to RIGI and inhibits signaling pathway leading to interferon production. Interacts with host TRIM25 (via SPRY domain); this interaction suppresses RIGI ubiquitination and results in decreased interaction between RIGI and MAVS.

The protein localises to the host cytoplasm. The protein resides in the host mitochondrion. It localises to the host nucleus. Functionally, plays a major role in antagonizing the type I IFN-mediated antiviral response by degrading or inhibiting multiple cellular factors required for either IFN induction or response pathways. Acts cooperatively with NS2 to repress activation and nuclear translocation of host IFN-regulatory factor IRF3. Also disrupts the association of IRF3 with CREBBP. Interacts with host mitochondrial-associated membrane (MAM) MAVS and prevents the interaction with RIGI. Interacts with TRIM25 to suppress TRIM25-mediated RIGI ubiquitination and thereby RIGI-MAVS interaction. Together with NS2, participates in the proteasomal degradation of host STAT2, IRF3, IRF7, TBK1 and RIGI through a NS-degradasome involving CUL2 and Elongin-C. The degradasome requires an intact mitochondrial MAVS. Decreases the levels of host TRAF3 and IKBKE/IKK-epsilon. As functions other than disruptions of the type I IFN-mediated antiviral signaling pathways, induces host SOCS1 and SOCS3 expression. Suppresses premature apoptosis by an NF-kappa-B-dependent, interferon-independent mechanism and thus facilitates virus growth. Additionally, NS1 may serve some inhibitory role in viral transcription and RNA replication. Suppresses proliferation and activation of host CD103+ CD8+ cytotoxic T-lymphocytes and Th17 helper T-lymphocytes. The chain is Non-structural protein 1 (1C) from Bos taurus (Bovine).